The following is a 309-amino-acid chain: Putative ankyrin repeat protein R603 (309 aa).

ANK repeat units lie at residues 53–82 (QVNGYFTYCVQKNKLDAIQYLYENNLMNPE), 83–112 (NKSQLFKIAIVHGNIDVLKLVIDYGIDVSL), 114–144 (DHFAITVCTRPISNTENIIQLLIDNGADVTS), 145–176 (NNNLPIKFAILKGTINKSVLDLLINNGADIHA), 177–206 (DEYFCAKYAAKCCYIFALKYIINLGIDVNM), 214–243 (NVLSDTAYSSNEYTYSCIKTLLENGADISF), and 245–274 (DDNDTLKMCRGSKTRNILILLLDYGFDISF).

The polypeptide is Putative ankyrin repeat protein R603 (Acanthamoeba polyphaga (Amoeba)).